The primary structure comprises 218 residues: Pyridoxine/pyridoxamine 5'-phosphate oxidase (218 aa).

Residues 66–71, Arg87, Lys88, and Gln110 each bind FMN; that span reads RVVLLK. Substrate is bound at residue Lys71. Positions 128, 132, and 136 each coordinate substrate. Residues 145-146 and Trp190 contribute to the FMN site; that span reads QS. 196 to 198 contributes to the substrate binding site; sequence RLH. Arg200 provides a ligand contact to FMN.

Belongs to the pyridoxamine 5'-phosphate oxidase family. In terms of assembly, homodimer. The cofactor is FMN.

It catalyses the reaction pyridoxamine 5'-phosphate + O2 + H2O = pyridoxal 5'-phosphate + H2O2 + NH4(+). The enzyme catalyses pyridoxine 5'-phosphate + O2 = pyridoxal 5'-phosphate + H2O2. It functions in the pathway cofactor metabolism; pyridoxal 5'-phosphate salvage; pyridoxal 5'-phosphate from pyridoxamine 5'-phosphate: step 1/1. Its pathway is cofactor metabolism; pyridoxal 5'-phosphate salvage; pyridoxal 5'-phosphate from pyridoxine 5'-phosphate: step 1/1. Functionally, catalyzes the oxidation of either pyridoxine 5'-phosphate (PNP) or pyridoxamine 5'-phosphate (PMP) into pyridoxal 5'-phosphate (PLP). The protein is Pyridoxine/pyridoxamine 5'-phosphate oxidase of Anaplasma marginale (strain St. Maries).